The following is a 142-amino-acid chain: Ribosome-binding factor A (142 aa).

Residues 119–142 (EAKQKQHGVETDAEQGETKDEGDK) form a disordered region.

It belongs to the RbfA family. Monomer. Binds 30S ribosomal subunits, but not 50S ribosomal subunits or 70S ribosomes.

It is found in the cytoplasm. Functionally, one of several proteins that assist in the late maturation steps of the functional core of the 30S ribosomal subunit. Associates with free 30S ribosomal subunits (but not with 30S subunits that are part of 70S ribosomes or polysomes). Required for efficient processing of 16S rRNA. May interact with the 5'-terminal helix region of 16S rRNA. This chain is Ribosome-binding factor A, found in Shewanella halifaxensis (strain HAW-EB4).